The primary structure comprises 389 residues: Chalcone synthase 1 (389 aa).

The active site involves cysteine 164.

It belongs to the thiolase-like superfamily. Chalcone/stilbene synthases family.

The enzyme catalyses (E)-4-coumaroyl-CoA + 3 malonyl-CoA + 3 H(+) = 2',4,4',6'-tetrahydroxychalcone + 3 CO2 + 4 CoA. It participates in secondary metabolite biosynthesis; flavonoid biosynthesis. In terms of biological role, the primary product of this enzyme is 4,2',4',6'-tetrahydroxychalcone (also termed naringenin-chalcone or chalcone) which can under specific conditions spontaneously isomerize into naringenin. This Cicer arietinum (Chickpea) protein is Chalcone synthase 1 (CHS1).